The sequence spans 680 residues: DNA-directed RNA polymerase subunit beta' (680 aa).

Residues C68, C70, C86, and C89 each coordinate Zn(2+). The Mg(2+) site is built by D488, D490, and D492.

This sequence belongs to the RNA polymerase beta' chain family. RpoC1 subfamily. In plastids the minimal PEP RNA polymerase catalytic core is composed of four subunits: alpha, beta, beta', and beta''. When a (nuclear-encoded) sigma factor is associated with the core the holoenzyme is formed, which can initiate transcription. Requires Mg(2+) as cofactor. The cofactor is Zn(2+).

Its subcellular location is the plastid. The protein resides in the chloroplast. It catalyses the reaction RNA(n) + a ribonucleoside 5'-triphosphate = RNA(n+1) + diphosphate. Its function is as follows. DNA-dependent RNA polymerase catalyzes the transcription of DNA into RNA using the four ribonucleoside triphosphates as substrates. The polypeptide is DNA-directed RNA polymerase subunit beta' (Nicotiana tabacum (Common tobacco)).